A 787-amino-acid chain; its full sequence is MRAQWPGQLWAALLALGALAGVVVGESNICTTRGVNSCQQCLAVSPVCAWCSDETLSQGSPRCNLKENLLKDNCAPESIEFPVSEAQILEARPLSSKGSGSSAQITQVSPQRIALRLRPDDSKIFSLQVRQVEDYPVDIYYLMDLSFSMKDDLSSIQTLGTKLASQMRKLTSNLRIGFGAFVDKPVSPYMYISPPQAIKNPCYNMKNACLPMFGYKHVLTLTDQVSRFNEEVKKQSVSRNRDAPEGGFDAIMQATVCDEKIGWRNDASHLLVFTTDAKTHIALDGRLAGIVLPNDGHCHIGTDNHYSASTTMDYPSLGLMTEKLSQKNINLIFAVTENVVSLYQNYSELIPGTTVGVLSDDSSNVLQLIVDAYGKIRSKVELEVRDLPEELSLSFNATCLNNEVIPGLKSCVGLKIGDTVSFSIEAKVRGCPQEKEQSFTIKPVGFKDSLTVQVTFDCDCACQAFAQPSSPRCNNGNGTFECGVCRCDQGWLGSMCECSEEDYRPSQQEECSPKEGQPICSQRGECLCGQCVCHSSDFGKITGKYCECDDFSCVRYKGEMCSGHGQCNCGDCVCDSDWTGYYCNCTTRTDTCMSTNGLLCSGRGNCECGSCVCVQPGSYGDTCEKCPTCPDACSFKKECVECKKFNRGTLHEENTCSRYCRDDIEQVKELTDTGKNAVNCTYKNEDDCVVRFQYYEDTSGRAVLYVVEEPECPKGPDILVVLLSVMGAILLIGLATLLIWKLLITIHDRKEFAKFEEERARAKWDTANNPLYKEATSTFTNITYRGT.

The signal sequence occupies residues Met1–Gly25. Topologically, residues Glu26–Asp717 are extracellular. The region spanning Ile29–Ala75 is the PSI domain. Cystine bridges form between Cys30–Cys48, Cys38–Cys460, Cys41–Cys63, Cys51–Cys74, Cys202–Cys209, Cys257–Cys298, Cys399–Cys411, Cys431–Cys458, Cys462–Cys482, Cys473–Cys485, Cys487–Cys496, Cys498–Cys528, Cys511–Cys526, Cys520–Cys531, Cys533–Cys546, Cys548–Cys569, Cys553–Cys567, Cys561–Cys572, and Cys574–Cys583. Residues Asp134–Ile376 form the VWFA domain. 2 residues coordinate Mg(2+): Ser146 and Ser148. Residues Ser148, Asp151, Asp152, and Asp183 each coordinate Ca(2+). Positions Cys202–Cys209 are CX3CL1-binding. Residues Cys202–Cys209 are involved in CX3CL1-, NRG1-, FGF1- and IGF1-binding. Asn240, Asp242, Pro244, Glu245, and Asp276 together coordinate Ca(2+). Position 245 (Glu245) interacts with Mg(2+). The segment at Leu292–Met312 is CX3CL1-binding. Residues Asn345 and Asn396 are each glycosylated (N-linked (GlcNAc...) asparagine). I-EGF domains lie at Cys462–Glu497, Cys498–Glu547, Cys548–Asn584, and Cys585–Glu624. Asn477 carries N-linked (GlcNAc...) asparagine glycosylation. Asn584 carries N-linked (GlcNAc...) asparagine glycosylation. Cystine bridges form between Cys585-Cys608, Cys592-Cys606, Cys600-Cys611, Cys613-Cys623, Cys626-Cys629, Cys633-Cys680, Cys639-Cys660, Cys642-Cys656, and Cys688-Cys712. Asn679 carries an N-linked (GlcNAc...) asparagine glycan. Residues Ile718–Trp740 traverse the membrane as a helical segment. Over Lys741–Thr787 the chain is Cytoplasmic. Thr766 carries the post-translational modification Phosphothreonine. The residue at position 772 (Tyr772) is a Phosphotyrosine. The short motif at Thr776–Ile782 is the LIR element. Phosphothreonine is present on Thr778. Tyr784 carries the phosphotyrosine modification.

Belongs to the integrin beta chain family. Heterodimer of an alpha and a beta subunit. Beta-3 (ITGB3) associates with either alpha-IIB (ITGA2B) or alpha-V (ITGAV). Interacts with FLNB and COMP. Interacts with PDIA6 following platelet stimulation. Interacts with SYK; upon activation by ITGB3 promotes platelet adhesion. Interacts with MYO10. Interacts with DAB2. Interacts with FERMT2. Integrin ITGAV:ITGB3 interacts with FBLN5 (via N-terminus). Interacts with EMP2; regulates the levels of the heterodimer ITGA5:ITGB3 integrin expression on the plasma membrane. ITGAV:ITGB3 interacts with CCN3. ITGAV:ITGB3 and ITGA2B:ITGB3 interact with SELP (via C-type lectin domain); the interaction mediates cell-cell interaction and adhesion. ITGAV:ITGB3 interacts with AGRA2. ITGAV:ITGB3 is found in a ternary complex with CX3CR1 and CX3CL1. ITGAV:ITGB3 is found in a ternary complex with NRG1 and ERBB3. ITGAV:ITGB3 is found in a ternary complex with FGF1 and FGFR1. ITGAV:ITGB3 interacts with FGF2; it is likely that FGF2 can simultaneously bind ITGAV:ITGB3 and FGF receptors. ITGAV:ITGB3 binds to IL1B. ITGAV:ITGB3 is found in a ternary complex with IGF1 and IGF1R. ITGAV:ITGB3 interacts with IGF2. ITGAV:ITGB3 interacts with FBN1. ITGAV:ITGB3 interacts with CD9, CD81 and CD151 (via second extracellular domain). Interacts (via the allosteric site (site 2)) with CXCL12 in a CXCR4-independent manner. Interacts with MXRA8/DICAM; the interaction inhibits ITGAV:ITGB3 heterodimer formation. ITGAV:ITGB3 interacts with PTN. Forms a complex with PTPRZ1 and PTN that stimulates endothelial cell migration through ITGB3 Tyr-772 phosphorylation. ITGAV:ITGB3 interacts with SLC6A4. Interacts with SLC6A4 (via C-terminus); this interaction regulates SLC6A4 trafficking. ITGA2B:ITGB3 interacts with PPIA/CYPA; the interaction is ROS and PPIase activity-dependent and is increased in the presence of thrombin. Interacts with tensin TNS3; TNS3 also interacts with PEAK1, thus acting as an adapter molecule to bridge the association of PEAK1 with ITGB3. Interacts with TM4SF19. In terms of processing, phosphorylated on tyrosine residues in response to thrombin-induced platelet aggregation. Probably involved in outside-in signaling.

It localises to the cell membrane. The protein localises to the cell projection. It is found in the lamellipodium membrane. The protein resides in the cell junction. Its subcellular location is the focal adhesion. It localises to the postsynaptic cell membrane. The protein localises to the synapse. Its function is as follows. Integrin alpha-V/beta-3 (ITGAV:ITGB3) is a receptor for cytotactin, fibronectin, laminin, matrix metalloproteinase-2, osteopontin, osteomodulin, prothrombin, thrombospondin, vitronectin and von Willebrand factor. Integrin alpha-IIB/beta-3 (ITGA2B:ITGB3) is a receptor for fibronectin, fibrinogen, plasminogen, prothrombin, thrombospondin and vitronectin. Integrins alpha-IIB/beta-3 and alpha-V/beta-3 recognize the sequence R-G-D in a wide array of ligands. Integrin alpha-IIB/beta-3 recognizes the sequence H-H-L-G-G-G-A-K-Q-A-G-D-V in fibrinogen gamma chain. Following activation integrin alpha-IIB/beta-3 brings about platelet/platelet interaction through binding of soluble fibrinogen. This step leads to rapid platelet aggregation which physically plugs ruptured endothelial surfaces. Fibrinogen binding enhances SELP expression in activated platelets. ITGAV:ITGB3 binds to fractalkine (CX3CL1) and acts as its coreceptor in CX3CR1-dependent fractalkine signaling. ITGAV:ITGB3 binds to NRG1 (via EGF domain) and this binding is essential for NRG1-ERBB signaling. ITGAV:ITGB3 binds to FGF1 and this binding is essential for FGF1 signaling. ITGAV:ITGB3 binds to FGF2 and this binding is essential for FGF2 signaling. ITGAV:ITGB3 binds to IGF1 and this binding is essential for IGF1 signaling. ITGAV:ITGB3 binds to IGF2 and this binding is essential for IGF2 signaling. ITGAV:ITGB3 binds to IL1B and this binding is essential for IL1B signaling. ITGAV:ITGB3 binds to PLA2G2A via a site (site 2) which is distinct from the classical ligand-binding site (site 1) and this induces integrin conformational changes and enhanced ligand binding to site 1. ITGAV:ITGB3 acts as a receptor for fibrillin-1 (FBN1) and mediates R-G-D-dependent cell adhesion to FBN1. ITGAV:ITGB3 binds to the Lilrb4a/Gp49b receptor and enhances the Lilrb4a-mediated inhibition of mast cell activation. ITGAV:ITGB3 also suppresses marginal zone B cell antibody production through its interaction with Lilrb4a. In brain, plays a role in synaptic transmission and plasticity. Involved in the regulation of the serotonin neurotransmission, is required to localize to specific compartments within the synapse the serotonin receptor SLC6A4 and for an appropriate reuptake of serotonin. Controls excitatory synaptic strength by regulating GRIA2-containing AMPAR endocytosis, which affects AMPAR abundance and composition. ITGAV:ITGB3 act as a receptor for CD40LG. ITGAV:ITGB3 acts as a receptor for IBSP and promotes cell adhesion and migration to IBSP. This Mus musculus (Mouse) protein is Integrin beta-3.